The chain runs to 141 residues: Cystatin-S (141 aa).

An N-terminal signal peptide occupies residues 1-20 (MARPLCTLLLLMATLAGALA). Residues Ser21 and Ser23 each carry the phosphoserine modification. The short motif at 76 to 80 (QTFGG) is the Secondary area of contact element. Cystine bridges form between Cys94–Cys104 and Cys118–Cys138.

Belongs to the cystatin family. Phosphorylated at both its N- and C-terminal regions. As to expression, expressed in submandibular and sublingual saliva but not in parotid saliva (at protein level). Expressed in saliva, tears, urine and seminal fluid.

The protein localises to the secreted. Its function is as follows. This protein strongly inhibits papain and ficin, partially inhibits stem bromelain and bovine cathepsin C, but does not inhibit porcine cathepsin B or clostripain. Papain is inhibited non-competitively. The sequence is that of Cystatin-S (CST4) from Homo sapiens (Human).